A 623-amino-acid polypeptide reads, in one-letter code: Serine/threonine-protein kinase nrc-2 (623 aa).

The disordered stretch occupies residues Met1–Arg215. Basic and acidic residues-rich tracts occupy residues Ser27–His36 and Leu170–Asp180. Over residues Leu199–Ala209 the composition is skewed to low complexity. The Protein kinase domain occupies Phe242–Phe532. Residues Ile248–Val256 and Lys271 each bind ATP. Asp367 serves as the catalytic Proton acceptor. Residues Val569–Val596 are disordered.

The protein belongs to the protein kinase superfamily. Ser/Thr protein kinase family. KIN82 subfamily.

It carries out the reaction L-seryl-[protein] + ATP = O-phospho-L-seryl-[protein] + ADP + H(+). It catalyses the reaction L-threonyl-[protein] + ATP = O-phospho-L-threonyl-[protein] + ADP + H(+). In terms of biological role, controls entry of the cell into the asexual developmental program. Required to repress entry into the conidiation program. The polypeptide is Serine/threonine-protein kinase nrc-2 (nrc-2) (Neurospora crassa (strain ATCC 24698 / 74-OR23-1A / CBS 708.71 / DSM 1257 / FGSC 987)).